Here is a 416-residue protein sequence, read N- to C-terminus: Multifunctional CCA protein (416 aa).

2 residues coordinate ATP: G8 and R11. G8 and R11 together coordinate CTP. Residues E21 and D23 each coordinate Mg(2+). 3 residues coordinate ATP: R91, R137, and R140. CTP contacts are provided by R91, R137, and R140. The HD domain occupies 228–329 (TGIHTLMVLK…LKLFDAVDAW (102 aa)).

It belongs to the tRNA nucleotidyltransferase/poly(A) polymerase family. Bacterial CCA-adding enzyme type 1 subfamily. Monomer. Can also form homodimers and oligomers. It depends on Mg(2+) as a cofactor. Requires Ni(2+) as cofactor.

It carries out the reaction a tRNA precursor + 2 CTP + ATP = a tRNA with a 3' CCA end + 3 diphosphate. The catalysed reaction is a tRNA with a 3' CCA end + 2 CTP + ATP = a tRNA with a 3' CCACCA end + 3 diphosphate. Its function is as follows. Catalyzes the addition and repair of the essential 3'-terminal CCA sequence in tRNAs without using a nucleic acid template. Adds these three nucleotides in the order of C, C, and A to the tRNA nucleotide-73, using CTP and ATP as substrates and producing inorganic pyrophosphate. tRNA 3'-terminal CCA addition is required both for tRNA processing and repair. Also involved in tRNA surveillance by mediating tandem CCA addition to generate a CCACCA at the 3' terminus of unstable tRNAs. While stable tRNAs receive only 3'-terminal CCA, unstable tRNAs are marked with CCACCA and rapidly degraded. The protein is Multifunctional CCA protein of Photorhabdus laumondii subsp. laumondii (strain DSM 15139 / CIP 105565 / TT01) (Photorhabdus luminescens subsp. laumondii).